The primary structure comprises 176 residues: CASP-like protein 5A1 (176 aa).

Over 1-45 (MDASHPAVYPVGVPPTAVDPPPRVRMKDYEGMPSTLGGLVLRSGQ) the chain is Cytoplasmic. Residues 46–66 (FACAVTALSIMISIPDFSSVT) form a helical membrane-spanning segment. Residue Ala67 is a topological domain, extracellular. The helical transmembrane segment at 68-88 (FCYLVAAMALQLLWSVSLAVV) threads the bilayer. The Cytoplasmic portion of the chain corresponds to 89 to 102 (DGYALLLRRTLHNP). A helical membrane pass occupies residues 103–123 (VLLSLLVIGDWVTSTLSLAAA). Over 124-151 (CSSAGITVLIDSDLAQCAHNHCGRYEAA) the chain is Extracellular. A helical transmembrane segment spans residues 152-172 (VAMAFLTWFLVSLSFFFSFWL). At 173-176 (LATR) the chain is on the cytoplasmic side.

The protein belongs to the Casparian strip membrane proteins (CASP) family. As to quaternary structure, homodimer and heterodimers.

It localises to the cell membrane. This is CASP-like protein 5A1 from Selaginella moellendorffii (Spikemoss).